A 444-amino-acid polypeptide reads, in one-letter code: Ribulose bisphosphate carboxylase large chain (444 aa).

Lys-7 carries the post-translational modification N6,N6,N6-trimethyllysine. Residues Asn-116 and Thr-166 each contribute to the substrate site. The Proton acceptor role is filled by Lys-168. Residue Lys-170 participates in substrate binding. Residues Lys-194, Asp-196, and Glu-197 each contribute to the Mg(2+) site. Position 194 is an N6-carboxylysine (Lys-194). His-287 functions as the Proton acceptor in the catalytic mechanism. The substrate site is built by Arg-288, His-320, and Ser-372.

This sequence belongs to the RuBisCO large chain family. Type I subfamily. In terms of assembly, heterohexadecamer of 8 large chains and 8 small chains; disulfide-linked. The disulfide link is formed within the large subunit homodimers. Mg(2+) is required as a cofactor. The disulfide bond which can form in the large chain dimeric partners within the hexadecamer appears to be associated with oxidative stress and protein turnover.

The protein localises to the plastid. It is found in the chloroplast. It carries out the reaction 2 (2R)-3-phosphoglycerate + 2 H(+) = D-ribulose 1,5-bisphosphate + CO2 + H2O. It catalyses the reaction D-ribulose 1,5-bisphosphate + O2 = 2-phosphoglycolate + (2R)-3-phosphoglycerate + 2 H(+). In terms of biological role, ruBisCO catalyzes two reactions: the carboxylation of D-ribulose 1,5-bisphosphate, the primary event in carbon dioxide fixation, as well as the oxidative fragmentation of the pentose substrate in the photorespiration process. Both reactions occur simultaneously and in competition at the same active site. The polypeptide is Ribulose bisphosphate carboxylase large chain (Watsonia angusta).